Reading from the N-terminus, the 153-residue chain is Putative trans-acting regulator pXO2-62/BXB0076/GBAA_pXO2_0076 (153 aa).

It belongs to the AtxA/AcpA family.

This Bacillus anthracis protein is Putative trans-acting regulator pXO2-62/BXB0076/GBAA_pXO2_0076.